Reading from the N-terminus, the 190-residue chain is Orotate phosphoribosyltransferase (190 aa).

Residue 114–122 coordinates 5-phospho-alpha-D-ribose 1-diphosphate; sequence EDVITTGGS. 2 residues coordinate orotate: Thr-118 and Arg-146.

Belongs to the purine/pyrimidine phosphoribosyltransferase family. PyrE subfamily. In terms of assembly, homodimer. The cofactor is Mg(2+).

The catalysed reaction is orotidine 5'-phosphate + diphosphate = orotate + 5-phospho-alpha-D-ribose 1-diphosphate. It functions in the pathway pyrimidine metabolism; UMP biosynthesis via de novo pathway; UMP from orotate: step 1/2. In terms of biological role, catalyzes the transfer of a ribosyl phosphate group from 5-phosphoribose 1-diphosphate to orotate, leading to the formation of orotidine monophosphate (OMP). In Caldicellulosiruptor bescii (strain ATCC BAA-1888 / DSM 6725 / KCTC 15123 / Z-1320) (Anaerocellum thermophilum), this protein is Orotate phosphoribosyltransferase.